The chain runs to 343 residues: N-acetyl-gamma-glutamyl-phosphate reductase (343 aa).

Cys-147 is a catalytic residue.

The protein belongs to the NAGSA dehydrogenase family. Type 1 subfamily.

The protein localises to the cytoplasm. It carries out the reaction N-acetyl-L-glutamate 5-semialdehyde + phosphate + NADP(+) = N-acetyl-L-glutamyl 5-phosphate + NADPH + H(+). It participates in amino-acid biosynthesis; L-arginine biosynthesis; N(2)-acetyl-L-ornithine from L-glutamate: step 3/4. Functionally, catalyzes the NADPH-dependent reduction of N-acetyl-5-glutamyl phosphate to yield N-acetyl-L-glutamate 5-semialdehyde. The polypeptide is N-acetyl-gamma-glutamyl-phosphate reductase (Listeria innocua serovar 6a (strain ATCC BAA-680 / CLIP 11262)).